The chain runs to 309 residues: NAD-dependent protein deacylase sirtuin-5B, mitochondrial (309 aa).

The N-terminal 35 residues, 1-35 (MILLPFHTRRLVSHVYCGLKPASQNKGIALEMTRP), are a transit peptide targeting the mitochondrion. The 271-residue stretch at 36-306 (SSNLANFREA…PPALARHETE (271 aa)) folds into the Deacetylase sirtuin-type domain. Position 57–76 (57–76 (GAGVSAESGVPTIIGAGGYW)) interacts with NAD(+). The substrate site is built by tyrosine 101 and arginine 104. Residue 139 to 142 (QNID) participates in NAD(+) binding. Residue histidine 157 is the Proton acceptor of the active site. Cysteine 165, cysteine 168, cysteine 206, and cysteine 211 together coordinate Zn(2+). NAD(+)-binding positions include 248 to 250 (GTS), 274 to 276 (NME), and cysteine 292.

This sequence belongs to the sirtuin family. Class III subfamily. Zn(2+) is required as a cofactor.

Its subcellular location is the mitochondrion. The protein resides in the cytoplasm. The protein localises to the cytosol. It localises to the nucleus. The catalysed reaction is N(6)-malonyl-L-lysyl-[protein] + NAD(+) + H2O = 2''-O-malonyl-ADP-D-ribose + nicotinamide + L-lysyl-[protein]. The enzyme catalyses N(6)-succinyl-L-lysyl-[protein] + NAD(+) + H2O = 2''-O-succinyl-ADP-D-ribose + nicotinamide + L-lysyl-[protein]. It catalyses the reaction N(6)-glutaryl-L-lysyl-[protein] + NAD(+) + H2O = 2''-O-glutaryl-ADP-D-ribose + nicotinamide + L-lysyl-[protein]. Functionally, NAD-dependent lysine demalonylase, desuccinylase and deglutarylase that specifically removes malonyl, succinyl and glutaryl groups on target proteins. Has weak NAD-dependent protein deacetylase activity; however this activity may not be physiologically relevant in vivo. In Xenopus laevis (African clawed frog), this protein is NAD-dependent protein deacylase sirtuin-5B, mitochondrial (sirt5-b).